Consider the following 527-residue polypeptide: 4-alpha-glucanotransferase (527 aa).

The protein belongs to the disproportionating enzyme family.

It is found in the cytoplasm. It carries out the reaction Transfers a segment of a (1-&gt;4)-alpha-D-glucan to a new position in an acceptor, which may be glucose or a (1-&gt;4)-alpha-D-glucan.. The chain is 4-alpha-glucanotransferase (malQ) from Chlamydia trachomatis serovar D (strain ATCC VR-885 / DSM 19411 / UW-3/Cx).